We begin with the raw amino-acid sequence, 597 residues long: Serine/arginine repetitive matrix protein 3 (597 aa).

Positions 1–31 (MSSTVNNGAASMQSTPDAANGFPQPSSSSGT) are enriched in polar residues. The tract at residues 1 to 47 (MSSTVNNGAASMQSTPDAANGFPQPSSSSGTWPRAEEELRAAEPGLV) is disordered. A CWF21 domain is found at 55-98 (LDHERKRRVELKCMELQEMMEEQGYSEEEIRQKVGTFRQMLMEK). A compositionally biased stretch (basic and acidic residues) spans 99–109 (EGVLTREDRPG). A disordered region spans residues 99-597 (EGVLTREDRP…GPAPLPPPAA (499 aa)). 4 stretches are compositionally biased toward basic residues: residues 149–158 (RGHRGYRTKH), 168–186 (PKKK…KKRR), 199–211 (LRKK…KHRR), and 219–243 (RRKR…KKRP). Low complexity-rich tracts occupy residues 257–278 (SGSS…PSRL) and 291–313 (SQRS…SPQR). 2 stretches are compositionally biased toward gly residues: residues 315 to 328 (GGSG…GGRP) and 374 to 383 (GRGGRAAGGA). Positions 384–412 (GRRRRRRRRRRRSRSSASAPRRRGRRRPR) are enriched in basic residues. 3 stretches are compositionally biased toward low complexity: residues 417-433 (RGSS…SDSG), 466-476 (RPASTSPSPGA), and 488-507 (SSRS…SPSK). Positions 530–549 (LSRDKDGEGRARHSEAEATR) are enriched in basic and acidic residues. Residues 550–565 (ARRRSRSYSPIRKRRR) are compositionally biased toward basic residues.

It belongs to the CWC21 family. As to expression, expressed in breast cancer cell lines.

In terms of biological role, may play a role in regulating breast cancer cell invasiveness. May be involved in RYBP-mediated breast cancer progression. In Homo sapiens (Human), this protein is Serine/arginine repetitive matrix protein 3 (SRRM3).